The following is a 307-amino-acid chain: UDP-3-O-acyl-N-acetylglucosamine deacetylase (307 aa).

Positions 79, 239, and 243 each coordinate Zn(2+). His-266 (proton donor) is an active-site residue.

Belongs to the LpxC family. Zn(2+) is required as a cofactor.

The catalysed reaction is a UDP-3-O-[(3R)-3-hydroxyacyl]-N-acetyl-alpha-D-glucosamine + H2O = a UDP-3-O-[(3R)-3-hydroxyacyl]-alpha-D-glucosamine + acetate. The protein operates within glycolipid biosynthesis; lipid IV(A) biosynthesis; lipid IV(A) from (3R)-3-hydroxytetradecanoyl-[acyl-carrier-protein] and UDP-N-acetyl-alpha-D-glucosamine: step 2/6. Catalyzes the hydrolysis of UDP-3-O-myristoyl-N-acetylglucosamine to form UDP-3-O-myristoylglucosamine and acetate, the committed step in lipid A biosynthesis. This chain is UDP-3-O-acyl-N-acetylglucosamine deacetylase, found in Tolumonas auensis (strain DSM 9187 / NBRC 110442 / TA 4).